The following is a 378-amino-acid chain: Putative glutamate--cysteine ligase 2 (378 aa).

The protein belongs to the glutamate--cysteine ligase type 2 family. YbdK subfamily.

It catalyses the reaction L-cysteine + L-glutamate + ATP = gamma-L-glutamyl-L-cysteine + ADP + phosphate + H(+). Its function is as follows. ATP-dependent carboxylate-amine ligase which exhibits weak glutamate--cysteine ligase activity. In Bdellovibrio bacteriovorus (strain ATCC 15356 / DSM 50701 / NCIMB 9529 / HD100), this protein is Putative glutamate--cysteine ligase 2.